A 644-amino-acid chain; its full sequence is Exoribonuclease 2 (644 aa).

Residues 189–516 form the RNB domain; it reads REDLTALDFV…NHRLLKAIIK (328 aa). The region spanning 561 to 643 is the S1 motif domain; the sequence is DSRFAAEIID…ETRSVIARPV (83 aa).

It belongs to the RNR ribonuclease family. RNase II subfamily.

The protein resides in the cytoplasm. It carries out the reaction Exonucleolytic cleavage in the 3'- to 5'-direction to yield nucleoside 5'-phosphates.. Involved in mRNA degradation. Hydrolyzes single-stranded polyribonucleotides processively in the 3' to 5' direction. The sequence is that of Exoribonuclease 2 from Cronobacter sakazakii (strain ATCC BAA-894) (Enterobacter sakazakii).